Reading from the N-terminus, the 330-residue chain is Ketol-acid reductoisomerase (NADP(+)) (330 aa).

The region spanning 1–181 is the KARI N-terminal Rossmann domain; sequence MNVYYEKDAD…GGTKAGVIET (181 aa). Residues 24 to 27, arginine 47, serine 50, serine 52, and 82 to 85 each bind NADP(+); these read YGSQ and DQNQ. Histidine 107 is a catalytic residue. NADP(+) is bound at residue glycine 133. In terms of domain architecture, KARI C-terminal knotted spans 182 to 327; sequence NFKNETETDL…AKLRNMMSWL (146 aa). Residues aspartate 190, glutamate 194, glutamate 226, and glutamate 230 each coordinate Mg(2+). Serine 251 serves as a coordination point for substrate.

Belongs to the ketol-acid reductoisomerase family. The cofactor is Mg(2+).

It carries out the reaction (2R)-2,3-dihydroxy-3-methylbutanoate + NADP(+) = (2S)-2-acetolactate + NADPH + H(+). It catalyses the reaction (2R,3R)-2,3-dihydroxy-3-methylpentanoate + NADP(+) = (S)-2-ethyl-2-hydroxy-3-oxobutanoate + NADPH + H(+). The protein operates within amino-acid biosynthesis; L-isoleucine biosynthesis; L-isoleucine from 2-oxobutanoate: step 2/4. Its pathway is amino-acid biosynthesis; L-valine biosynthesis; L-valine from pyruvate: step 2/4. Its function is as follows. Involved in the biosynthesis of branched-chain amino acids (BCAA). Catalyzes an alkyl-migration followed by a ketol-acid reduction of (S)-2-acetolactate (S2AL) to yield (R)-2,3-dihydroxy-isovalerate. In the isomerase reaction, S2AL is rearranged via a Mg-dependent methyl migration to produce 3-hydroxy-3-methyl-2-ketobutyrate (HMKB). In the reductase reaction, this 2-ketoacid undergoes a metal-dependent reduction by NADPH to yield (R)-2,3-dihydroxy-isovalerate. This is Ketol-acid reductoisomerase (NADP(+)) from Chlorobium chlorochromatii (strain CaD3).